The sequence spans 174 residues: Gamma-crystallin E (174 aa).

Beta/gamma crystallin 'Greek key' domains are found at residues G2–S40 and G41–P83. A connecting peptide region spans residues H84 to S87. 2 Beta/gamma crystallin 'Greek key' domains span residues H88–E128 and G129–M171.

Belongs to the beta/gamma-crystallin family. As to expression, detected in the superior olivary complex of the auditory hindbrain.

Crystallins are the dominant structural components of the vertebrate eye lens. The polypeptide is Gamma-crystallin E (Cryge) (Mus musculus (Mouse)).